We begin with the raw amino-acid sequence, 199 residues long: Thymidine kinase (199 aa).

ATP is bound by residues 23-30 (GSMFSGKT) and 95-98 (DEAQ). The active-site Proton acceptor is Glu96. Cys152, Cys155, Cys184, and Cys187 together coordinate Zn(2+).

It belongs to the thymidine kinase family. Homotetramer.

The protein localises to the cytoplasm. It catalyses the reaction thymidine + ATP = dTMP + ADP + H(+). The polypeptide is Thymidine kinase (Bacteroides thetaiotaomicron (strain ATCC 29148 / DSM 2079 / JCM 5827 / CCUG 10774 / NCTC 10582 / VPI-5482 / E50)).